The primary structure comprises 205 residues: Metal-independent carbonic anhydrase (205 aa).

A signal peptide spans 1–24 (MNLFKPRILVLFAATALISGIAIV). Hydrogencarbonate-binding residues include Thr-106 and Tyr-124.

The protein belongs to the iota-class carbonic anhydrase family. As to quaternary structure, homotetramer; dimer of dimers. Does not require a metal cofactor. serves as cofactor.

It catalyses the reaction hydrogencarbonate + H(+) = CO2 + H2O. With respect to regulation, activity is not affected by EDTA or 2,6-pyridinedicarboxylic acid (PDA). Activity is not affected by addition of most divalent metal ions, except zinc ions which decrease the activity. Inhibited by the iodide ion. Catalyzes the hydration of carbon dioxide (CO2) to bicarbonate (HCO3(-)). Has only very low bicarbonate dehydration activity. May function even in metal-poor environments. This Nostoc sp. (strain PCC 7120 / SAG 25.82 / UTEX 2576) protein is Metal-independent carbonic anhydrase.